The chain runs to 659 residues: Ion-translocating oxidoreductase complex subunit C (659 aa).

2 4Fe-4S ferredoxin-type domains span residues 366–397 and 407–436; these read TEMG…QQLY and KARN…VQYY. Residues Cys-377, Cys-380, Cys-383, Cys-387, Cys-416, Cys-419, Cys-422, and Cys-426 each contribute to the [4Fe-4S] cluster site.

The protein belongs to the 4Fe4S bacterial-type ferredoxin family. RnfC subfamily. As to quaternary structure, the complex is composed of six subunits: RnfA, RnfB, RnfC, RnfD, RnfE and RnfG. It depends on [4Fe-4S] cluster as a cofactor.

The protein resides in the cell inner membrane. Functionally, part of a membrane-bound complex that couples electron transfer with translocation of ions across the membrane. The polypeptide is Ion-translocating oxidoreductase complex subunit C (Yersinia pseudotuberculosis serotype IB (strain PB1/+)).